Here is an 868-residue protein sequence, read N- to C-terminus: Muscle, skeletal receptor tyrosine-protein kinase (868 aa).

Positions 1–21 are cleaved as a signal peptide; it reads MRELVNIPLLQMLTLVAFSGT. Residues 22–494 lie on the Extracellular side of the membrane; that stretch reads EKLPKAPVIT…FAVSPAYSMT (473 aa). Ig-like domains lie at 28–116, 121–205, and 212–302; these read PVIT…GALQ, PKIT…KLVK, and ARIL…ATVS. 3 disulfide bridges follow: Cys-49–Cys-99, Cys-98–Cys-112, and Cys-142–Cys-190. An N-linked (GlcNAc...) asparagine glycan is attached at Asn-222. 6 disulfide bridges follow: Cys-233–Cys-282, Cys-317–Cys-382, Cys-325–Cys-375, Cys-366–Cys-406, Cys-394–Cys-447, and Cys-398–Cys-434. Residues 312–450 enclose the FZ domain; that stretch reads DSQGYCAQYR…HRDPTACTRL (139 aa). N-linked (GlcNAc...) asparagine glycosylation occurs at Asn-338. N-linked (GlcNAc...) asparagine glycosylation occurs at Asn-459. Residues 495–515 form a helical membrane-spanning segment; sequence VIISIVSSFALFALLTIATLY. Residues 516–868 lie on the Cytoplasmic side of the membrane; that stretch reads CCRRRKEWKN…CERAEGTVGV (353 aa). A Phosphotyrosine; by autocatalysis modification is found at Tyr-553. The 282-residue stretch at 574–855 folds into the Protein kinase domain; the sequence is IEYVRDIGEG…PSFCSIHRIL (282 aa). Residues 580–588 and Lys-608 contribute to the ATP site; that span reads IGEGAFGRV. Ser-680 and Ser-697 each carry phosphoserine; by CK2. Asp-724 serves as the catalytic Proton acceptor. A Phosphotyrosine; by autocatalysis modification is found at Tyr-754.

It belongs to the protein kinase superfamily. Tyr protein kinase family. As to quaternary structure, monomer. Homodimer. Interacts with LRP4; the heterodimer forms an AGRIN receptor complex that binds AGRIN resulting in activation of MUSK. Forms a heterotetramer composed of 2 DOK7 and 2 MUSK molecules which facilitates MUSK trans-autophosphorylation on tyrosine residue and activation. Interacts (via cytoplasmic part) with DOK7 (via IRS-type PTB domain); requires MUSK phosphorylation. Interacts with DVL1 (via DEP domain); the interaction is direct and mediates the formation of a DVL1, MUSK and PAK1 ternary complex involved in AChR clustering. Interacts with PDZRN3; this interaction is enhanced by agrin. Interacts with FNTA; the interaction is direct and mediates AGRIN-induced phosphorylation and activation of FNTA. Interacts with CSNK2B; mediates regulation by CK2. Interacts (via the cytoplasmic domain) with DNAJA3. Interacts with NSF; may regulate MUSK endocytosis and activity. Interacts with CAV3; may regulate MUSK signaling. Interacts with RNF31. Mg(2+) is required as a cofactor. Ubiquitinated by PDZRN3. Ubiquitination promotes endocytosis and lysosomal degradation. In terms of processing, phosphorylated. Phosphorylation is induced by AGRIN. Autophosphorylated. Autophosphorylation at Tyr-553 is required for interaction with DOK7 which in turn stimulates the phosphorylation and the activation of MUSK. Post-translationally, neddylated. In terms of tissue distribution, expressed preferentially in skeletal muscle.

It is found in the postsynaptic cell membrane. It carries out the reaction L-tyrosyl-[protein] + ATP = O-phospho-L-tyrosyl-[protein] + ADP + H(+). Positively regulated by CK2. Its function is as follows. Receptor tyrosine kinase which plays a central role in the formation and the maintenance of the neuromuscular junction (NMJ), the synapse between the motor neuron and the skeletal muscle. Recruitment of AGRIN by LRP4 to the MUSK signaling complex induces phosphorylation and activation of MUSK, the kinase of the complex. The activation of MUSK in myotubes regulates the formation of NMJs through the regulation of different processes including the specific expression of genes in subsynaptic nuclei, the reorganization of the actin cytoskeleton and the clustering of the acetylcholine receptors (AChR) in the postsynaptic membrane. May regulate AChR phosphorylation and clustering through activation of ABL1 and Src family kinases which in turn regulate MUSK. DVL1 and PAK1 that form a ternary complex with MUSK are also important for MUSK-dependent regulation of AChR clustering. May positively regulate Rho family GTPases through FNTA. Mediates the phosphorylation of FNTA which promotes prenylation, recruitment to membranes and activation of RAC1 a regulator of the actin cytoskeleton and of gene expression. Other effectors of the MUSK signaling include DNAJA3 which functions downstream of MUSK. May also play a role within the central nervous system by mediating cholinergic responses, synaptic plasticity and memory formation. The sequence is that of Muscle, skeletal receptor tyrosine-protein kinase (Musk) from Mus musculus (Mouse).